The chain runs to 508 residues: Photosystem II CP47 reaction center protein (508 aa).

A run of 6 helical transmembrane segments spans residues 21-36, 101-115, 140-156, 203-218, 237-252, and 457-472; these read SVHI…WAGS, IVFS…IWHW, GIHL…FGAF, IAAG…FHLS, VLSS…AFVV, and SFAL…HGSR.

This sequence belongs to the PsbB/PsbC family. PsbB subfamily. PSII is composed of 1 copy each of membrane proteins PsbA, PsbB, PsbC, PsbD, PsbE, PsbF, PsbH, PsbI, PsbJ, PsbK, PsbL, PsbM, PsbT, PsbX, PsbY, PsbZ, Psb30/Ycf12, at least 3 peripheral proteins of the oxygen-evolving complex and a large number of cofactors. It forms dimeric complexes. It depends on Binds multiple chlorophylls. PSII binds additional chlorophylls, carotenoids and specific lipids. as a cofactor.

The protein resides in the plastid. It localises to the chloroplast thylakoid membrane. Its function is as follows. One of the components of the core complex of photosystem II (PSII). It binds chlorophyll and helps catalyze the primary light-induced photochemical processes of PSII. PSII is a light-driven water:plastoquinone oxidoreductase, using light energy to abstract electrons from H(2)O, generating O(2) and a proton gradient subsequently used for ATP formation. The chain is Photosystem II CP47 reaction center protein from Helianthus annuus (Common sunflower).